We begin with the raw amino-acid sequence, 206 residues long: Somatotropin (206 aa).

Residues 1-18 (MLDRVVVLLSVLCLGVSS) form the signal peptide. Glutamine 19 carries the pyrrolidone carboxylic acid modification. A Zn(2+)-binding site is contributed by histidine 37. A disulfide bond links cysteine 70 and cysteine 179. A Zn(2+)-binding site is contributed by glutamate 188. Cysteine 196 and cysteine 204 form a disulfide bridge.

It belongs to the somatotropin/prolactin family.

The protein localises to the secreted. Functionally, growth hormone plays an important role in growth control and is involved in the regulation of several anabolic processes. Implicated as an osmoregulatory substance important for seawater adaptation. This Pseudocaranx dentex (White trevally) protein is Somatotropin (gh).